The following is a 140-amino-acid chain: Ribosomal RNA large subunit methyltransferase H (140 aa).

S-adenosyl-L-methionine is bound by residues Leu-55 and Gly-87.

Belongs to the RNA methyltransferase RlmH family. In terms of assembly, homodimer.

The protein resides in the cytoplasm. It catalyses the reaction pseudouridine(1915) in 23S rRNA + S-adenosyl-L-methionine = N(3)-methylpseudouridine(1915) in 23S rRNA + S-adenosyl-L-homocysteine + H(+). Specifically methylates the pseudouridine at position 1915 (m3Psi1915) in 23S rRNA. The polypeptide is Ribosomal RNA large subunit methyltransferase H (Erythrobacter litoralis (strain HTCC2594)).